A 635-amino-acid chain; its full sequence is Chaperone protein HtpG (635 aa).

The interval 1–337 is a; substrate-binding; the sequence is MELKMHNVQE…SPDLPLNISR (337 aa). The interval 338–556 is b; that stretch reads ETLQNNRVVE…EGAMDLRMER (219 aa). The tract at residues 557 to 635 is c; the sequence is FLREQKQLNY…LNNLLGKISV (79 aa).

It belongs to the heat shock protein 90 family. As to quaternary structure, homodimer.

It is found in the cytoplasm. In terms of biological role, molecular chaperone. Has ATPase activity. The sequence is that of Chaperone protein HtpG from Wolbachia pipientis wMel.